The following is an 886-amino-acid chain: Receptor-like kinase TMK2 (886 aa).

A signal peptide spans M1–S20. Residues S21–K460 lie on the Extracellular side of the membrane. Residue N41 is glycosylated (N-linked (GlcNAc...) asparagine). A disulfide bridge links C48 with C56. LRR repeat units lie at residues S59–L83, T84–L106, K107–G129, S131–A155, S157–G179, F182–S206, V208–M232, T233–G254, L255–L279, and S281–P302. N154, N167, and N202 each carry an N-linked (GlcNAc...) asparagine glycan. N-linked (GlcNAc...) asparagine glycosylation is present at N237. A glycan (N-linked (GlcNAc...) asparagine) is linked at N298. 2 disulfides stabilise this stretch: C315-C323 and C353-C361. 3 LRR repeats span residues G363–D386, F387–K410, and L411–T438. 5 N-linked (GlcNAc...) asparagine glycosylation sites follow: N377, N394, N401, N432, and N437. Residues I461–F481 form a helical membrane-spanning segment. Over L482–R886 the chain is Cytoplasmic. Residues F547–V827 enclose the Protein kinase domain. Residues L553–V561 and K575 each bind ATP. Residue D676 is the Proton acceptor of the active site.

It belongs to the protein kinase superfamily. Ser/Thr protein kinase family. Expressed in siliques and flowers.

It localises to the membrane. It catalyses the reaction L-seryl-[protein] + ATP = O-phospho-L-seryl-[protein] + ADP + H(+). It carries out the reaction L-threonyl-[protein] + ATP = O-phospho-L-threonyl-[protein] + ADP + H(+). Functionally, involved in auxin signal transduction and cell expansion and proliferation regulation. The chain is Receptor-like kinase TMK2 from Arabidopsis thaliana (Mouse-ear cress).